A 264-amino-acid chain; its full sequence is Small ribosomal subunit protein uS2 (264 aa).

Residues 228–264 form a disordered region; the sequence is HEDVSAGPVEEQSDEAQAAEQGTEGDTAQLTSSQGRS. Residues 251-264 show a composition bias toward polar residues; sequence EGDTAQLTSSQGRS.

The protein belongs to the universal ribosomal protein uS2 family.

This Deinococcus radiodurans (strain ATCC 13939 / DSM 20539 / JCM 16871 / CCUG 27074 / LMG 4051 / NBRC 15346 / NCIMB 9279 / VKM B-1422 / R1) protein is Small ribosomal subunit protein uS2.